The following is a 210-amino-acid chain: Large ribosomal subunit protein uL3 (210 aa).

The disordered stretch occupies residues 134 to 153 (THGNSLSHRAPGSIGQNQTP). The residue at position 151 (Q151) is an N5-methylglutamine.

This sequence belongs to the universal ribosomal protein uL3 family. Part of the 50S ribosomal subunit. Forms a cluster with proteins L14 and L19. Post-translationally, methylated by PrmB.

Its function is as follows. One of the primary rRNA binding proteins, it binds directly near the 3'-end of the 23S rRNA, where it nucleates assembly of the 50S subunit. In Aeromonas salmonicida (strain A449), this protein is Large ribosomal subunit protein uL3.